Here is a 173-residue protein sequence, read N- to C-terminus: Crossover junction endodeoxyribonuclease RuvC (173 aa).

Catalysis depends on residues Asp8, Glu67, and Asp139. Residues Asp8, Glu67, and Asp139 each contribute to the Mg(2+) site.

This sequence belongs to the RuvC family. Homodimer which binds Holliday junction (HJ) DNA. The HJ becomes 2-fold symmetrical on binding to RuvC with unstacked arms; it has a different conformation from HJ DNA in complex with RuvA. In the full resolvosome a probable DNA-RuvA(4)-RuvB(12)-RuvC(2) complex forms which resolves the HJ. Mg(2+) is required as a cofactor.

The protein resides in the cytoplasm. It carries out the reaction Endonucleolytic cleavage at a junction such as a reciprocal single-stranded crossover between two homologous DNA duplexes (Holliday junction).. Its function is as follows. The RuvA-RuvB-RuvC complex processes Holliday junction (HJ) DNA during genetic recombination and DNA repair. Endonuclease that resolves HJ intermediates. Cleaves cruciform DNA by making single-stranded nicks across the HJ at symmetrical positions within the homologous arms, yielding a 5'-phosphate and a 3'-hydroxyl group; requires a central core of homology in the junction. The consensus cleavage sequence is 5'-(A/T)TT(C/G)-3'. Cleavage occurs on the 3'-side of the TT dinucleotide at the point of strand exchange. HJ branch migration catalyzed by RuvA-RuvB allows RuvC to scan DNA until it finds its consensus sequence, where it cleaves and resolves the cruciform DNA. This chain is Crossover junction endodeoxyribonuclease RuvC, found in Klebsiella pneumoniae subsp. pneumoniae (strain ATCC 700721 / MGH 78578).